Reading from the N-terminus, the 248-residue chain is 3-deoxy-manno-octulosonate cytidylyltransferase (248 aa).

This sequence belongs to the KdsB family.

Its subcellular location is the cytoplasm. It carries out the reaction 3-deoxy-alpha-D-manno-oct-2-ulosonate + CTP = CMP-3-deoxy-beta-D-manno-octulosonate + diphosphate. The protein operates within nucleotide-sugar biosynthesis; CMP-3-deoxy-D-manno-octulosonate biosynthesis; CMP-3-deoxy-D-manno-octulosonate from 3-deoxy-D-manno-octulosonate and CTP: step 1/1. Its pathway is bacterial outer membrane biogenesis; lipopolysaccharide biosynthesis. Functionally, activates KDO (a required 8-carbon sugar) for incorporation into bacterial lipopolysaccharide in Gram-negative bacteria. The sequence is that of 3-deoxy-manno-octulosonate cytidylyltransferase from Escherichia coli (strain K12 / MC4100 / BW2952).